The following is a 139-amino-acid chain: Large ribosomal subunit protein uL14 (139 aa).

The protein belongs to the universal ribosomal protein uL14 family.

This Syntrichia ruralis (Great hairy screw-moss) protein is Large ribosomal subunit protein uL14 (RPL23).